We begin with the raw amino-acid sequence, 1107 residues long: Integrator complex subunit 6 homolog (1107 aa).

In terms of domain architecture, VWFA spans 2–195 (LITFVVDTSG…LPMEPAIAPM (194 aa)). Disordered regions lie at residues 454 to 515 (RIIN…SGNL), 542 to 572 (DNETSENSELSQELSESSTTGSSGGGSSSNI), 629 to 801 (TLRD…VSSP), 818 to 861 (QISS…IVNN), and 946 to 1034 (VVRP…TTPN). Composition is skewed to low complexity over residues 460–513 (QQQQ…SGSG) and 546–562 (SENSELSQELSESSTTG). Positions 629 to 639 (TLRDIDDDKKP) are enriched in basic and acidic residues. Residues 693–801 (PSLPTLNSLS…PIPSTTVSSP (109 aa)) show a composition bias toward low complexity. The span at 846–857 (SPPPPPPPPPLP) shows a compositional bias: pro residues. Positions 956–975 (PLTIDTLTSSSSSSTIPTTT) are enriched in low complexity. Over residues 976 to 996 (NGSLSTHDTPNTSPTLSSINY) the composition is skewed to polar residues. Low complexity predominate over residues 997–1034 (NNNNNNNNNNNNNNNNNNNNNNNNNNRKNSIITTTTPN). An MIF4G domain is found at 1041 to 1103 (IKFVHKEIRR…SLISKLIGYI (63 aa)).

Belongs to the Integrator subunit 6 family. In terms of assembly, component of the Integrator complex. The core complex associates with protein phosphatase 2A subunits, to form the Integrator-PP2A (INTAC) complex.

Its subcellular location is the nucleus. It localises to the chromosome. Component of the integrator complex, a multiprotein complex that terminates RNA polymerase II (Pol II) transcription in the promoter-proximal region of genes. The integrator complex provides a quality checkpoint during transcription elongation by driving premature transcription termination of transcripts that are unfavorably configured for transcriptional elongation: the complex terminates transcription by (1) catalyzing dephosphorylation of the C-terminal domain (CTD) of Pol II subunit polr2a, (2) degrading the exiting nascent RNA transcript via endonuclease activity and (3) promoting the release of Pol II from bound DNA. The integrator complex is also involved in terminating the synthesis of non-coding Pol II transcripts, such as enhancer RNAs (eRNAs), small nuclear RNAs (snRNAs), telomerase RNAs and long non-coding RNAs (lncRNAs). Within the integrator complex, INTS6 acts as a molecular adapter that promotes assembly of protein phosphatase 2A (PP2A) subunits to the integrator core complex, promoting recruitment of PP2A to transcription pause-release checkpoint. This is Integrator complex subunit 6 homolog (ints6) from Dictyostelium discoideum (Social amoeba).